Here is a 282-residue protein sequence, read N- to C-terminus: Pantothenate synthetase (282 aa).

Residue 30 to 37 participates in ATP binding; that stretch reads MGFLHDGH. His37 acts as the Proton donor in catalysis. Position 60 (Gln60) interacts with (R)-pantoate. A beta-alanine-binding site is contributed by Gln60. 146 to 149 is an ATP binding site; sequence GQKD. Position 152 (Gln152) interacts with (R)-pantoate. Residues Ile175 and 183-186 each bind ATP; that span reads KSSR.

It belongs to the pantothenate synthetase family. As to quaternary structure, homodimer.

The protein localises to the cytoplasm. It catalyses the reaction (R)-pantoate + beta-alanine + ATP = (R)-pantothenate + AMP + diphosphate + H(+). It functions in the pathway cofactor biosynthesis; (R)-pantothenate biosynthesis; (R)-pantothenate from (R)-pantoate and beta-alanine: step 1/1. Catalyzes the condensation of pantoate with beta-alanine in an ATP-dependent reaction via a pantoyl-adenylate intermediate. The sequence is that of Pantothenate synthetase from Campylobacter jejuni subsp. jejuni serotype O:6 (strain 81116 / NCTC 11828).